Reading from the N-terminus, the 353-residue chain is Forkhead box protein I3-A (353 aa).

Residues 116-210 (RPPYSYSALI…DNGNFRRKRK (95 aa)) constitute a DNA-binding region (fork-head). The interval 201-255 (DNGNFRRKRKRKSDSLAEEEGKGYSGSDSALSSPKNPSDSSERGNSPISTDQAPC) is disordered. The short motif at 206 to 212 (RRKRKRK) is the Nuclear localization signal element. Residues 213 to 222 (SDSLAEEEGK) are compositionally biased toward basic and acidic residues. The segment covering 226–252 (GSDSALSSPKNPSDSSERGNSPISTDQ) has biased composition (polar residues).

As to expression, expressed in ionocyte precursors.

It is found in the nucleus. In terms of biological role, transcription factor required for epithelial cell differentiation. Involved in specification of skin ionocytes from epidermal precursors. The chain is Forkhead box protein I3-A from Danio rerio (Zebrafish).